The following is a 302-amino-acid chain: tRNA dimethylallyltransferase (302 aa).

Gly-9–Ser-16 provides a ligand contact to ATP. Thr-11 to Ser-16 lines the substrate pocket. The segment at Asp-34–Gln-37 is interaction with substrate tRNA.

It belongs to the IPP transferase family. As to quaternary structure, monomer. The cofactor is Mg(2+).

The enzyme catalyses adenosine(37) in tRNA + dimethylallyl diphosphate = N(6)-dimethylallyladenosine(37) in tRNA + diphosphate. Functionally, catalyzes the transfer of a dimethylallyl group onto the adenine at position 37 in tRNAs that read codons beginning with uridine, leading to the formation of N6-(dimethylallyl)adenosine (i(6)A). The chain is tRNA dimethylallyltransferase from Gloeobacter violaceus (strain ATCC 29082 / PCC 7421).